Consider the following 126-residue polypeptide: Protein ApaG (126 aa).

The ApaG domain maps to 2-126 (TELETSIKID…FRLSIPGLLH (125 aa)).

The polypeptide is Protein ApaG (Shewanella woodyi (strain ATCC 51908 / MS32)).